The following is a 461-amino-acid chain: MTTDNSAPTASPWWSLPGKFLRREFLPVLTDLRLAIALLLIIALFSISGTVIEQGQSPAFYQSNYPEHPALFGFLTWKVIQVVGLDHVYRTWWFLSLLVLFGTSLTACTFTRQLPALKTAQRWKYYEEPRQFQKLALSAELDAGSVNSLSQILQNRRYKIFQEKDDILYARKGIVGRIGPIIVHIGIVTILLGSIWGAMTGFIAQEMVPSGETFQVKNIIDAGPLAAGQFPQDWSVRVNRFWIDYTPKGGIDQFYSDMSVLDNQGQEVDHKKIFVNQPLRYHGVTFYQTDWGISGVRVRLNKSPIFQLPMALLNTNGQGRIWGTWIPTKPDLSEGVSLLAKDLQGMVLIYDAQGKLVDTVRAGMSTQVNGVTLKVLDVVGSTGLQIKADPGIPIVYTGFGILMLGVVMSYFSHSQIWALQKGDRLYVGGKTNRAQVAFEQEVLDILERLNSQSATVINQQS.

The next 3 membrane-spanning stretches (helical) occupy residues 32–52 (LRLAIALLLIIALFSISGTVI), 91–111 (TWWFLSLLVLFGTSLTACTFT), and 178–198 (IGPIIVHIGIVTILLGSIWGA).

The protein belongs to the Ccs1/CcsB family. In terms of assembly, may interact with CcsA.

Its subcellular location is the cellular thylakoid membrane. In terms of biological role, required during biogenesis of c-type cytochromes (cytochrome c6 and cytochrome f) at the step of heme attachment. This Nostoc sp. (strain PCC 7120 / SAG 25.82 / UTEX 2576) protein is Cytochrome c biogenesis protein CcsB.